The following is an 85-amino-acid chain: Beta-insect depressant toxin BjIT2 (85 aa).

The signal sequence occupies residues 1–21; the sequence is MKLLLLLVISASMLLECLVNA. The LCN-type CS-alpha/beta domain occupies 22-82; it reads DGYIRKKDGC…TWKSSTNTCG (61 aa). Disulfide bonds link cysteine 31-cysteine 81, cysteine 35-cysteine 56, cysteine 42-cysteine 63, and cysteine 46-cysteine 65. The propeptide at 83 to 85 is removed by a carboxypeptidase; it reads RKK.

This sequence belongs to the long (4 C-C) scorpion toxin superfamily. Sodium channel inhibitor family. Beta subfamily. Post-translationally, C-terminal basic residues are removed by a carboxypeptidase. As to expression, expressed by the venom gland.

It localises to the secreted. Depressant insect beta-toxins cause a transient contraction paralysis followed by a slow flaccid paralysis. They bind voltage-independently at site-4 of sodium channels (Nav) and shift the voltage of activation toward more negative potentials thereby affecting sodium channel activation and promoting spontaneous and repetitive firing. This toxin is active only on insects. The polypeptide is Beta-insect depressant toxin BjIT2 (Hottentotta judaicus (Black scorpion)).